A 673-amino-acid chain; its full sequence is Bifunctional lycopene cyclase/phytoene synthase (673 aa).

Residues 1–251 (MTALAYYQIH…IVLGLSACDH (251 aa)) form a lycopene beta-cyclase region. Transmembrane regions (helical) follow at residues 9–29 (IHLIYTLPILGLLGLLTSPIL), 36–56 (KISILVFIAFSATTPWDSWII), 81–101 (YEEYAFFVIQTVITGLVYVLA), 117–137 (SALSLALKALIPLPIIYLFTA), 157–177 (LSLLITPPTMLLAALSGEYAF), 187–207 (TIAAIMIPTVYLIWVDYVAVG), and 226–246 (VLPIEEAMFFLLTNLMIVLGL). Positions 258-673 (LHGRTIYGNK…SVVMSGWEGQ (416 aa)) are phytoene synthase. Positions 376–399 (KILSSPLLPPSHPSRPTGMYPLPP) are disordered.

The protein in the N-terminal section; belongs to the lycopene beta-cyclase family. It in the C-terminal section; belongs to the phytoene/squalene synthase family.

It localises to the membrane. The enzyme catalyses all-trans-lycopene = gamma-carotene. It catalyses the reaction gamma-carotene = all-trans-beta-carotene. It carries out the reaction 2 (2E,6E,10E)-geranylgeranyl diphosphate = 15-cis-phytoene + 2 diphosphate. It participates in carotenoid biosynthesis; beta-carotene biosynthesis. The protein operates within carotenoid biosynthesis; phytoene biosynthesis; all-trans-phytoene from geranylgeranyl diphosphate: step 1/1. Its function is as follows. Bifunctional enzyme that catalyzes the reactions from geranylgeranyl diphosphate to phytoene (phytoene synthase) and lycopene to beta-carotene via the intermediate gamma-carotene (lycopene cyclase). The cyclase preferentially catalyzes the symmetric cyclization of both ends of the substrate to produce dicyclic carotenoids. Beta-carotene is further processed to the acidic carotenoid astaxanthin. This chain is Bifunctional lycopene cyclase/phytoene synthase, found in Phaffia rhodozyma (Yeast).